The following is a 257-amino-acid chain: Serine/arginine-rich splicing factor 1 (257 aa).

Position 2 is an N-acetylserine (Ser-2). Residues 16–91 (CRIYVGNLPP…YRLRVEFPRS (76 aa)) enclose the RRM 1 domain. A disordered region spans residues 88–116 (FPRSGRGTGRGGGGGGGGGAPRGRYGPPS). Residues 93–108 (RGTGRGGGGGGGGGAP) are compositionally biased toward gly residues. Residues 121–195 (YRVIVSGLPP…ETAYIRVKVD (75 aa)) form the RRM 2 domain.

Its subcellular location is the cytoplasm. The protein resides in the nucleus speckle. May play a role in preventing exon skipping, ensuring the accuracy of splicing and regulating alternative splicing. The polypeptide is Serine/arginine-rich splicing factor 1 (SRSF1) (Gallus gallus (Chicken)).